Here is a 306-residue protein sequence, read N- to C-terminus: Putative S-adenosyl-L-methionine-dependent methyltransferase MAV_4442 (306 aa).

Residues aspartate 129 and 158–159 each bind S-adenosyl-L-methionine; that span reads DL.

This sequence belongs to the UPF0677 family.

Exhibits S-adenosyl-L-methionine-dependent methyltransferase activity. In Mycobacterium avium (strain 104), this protein is Putative S-adenosyl-L-methionine-dependent methyltransferase MAV_4442.